Here is a 75-residue protein sequence, read N- to C-terminus: Lysis protein (75 aa).

Over residues 1 to 16 (METRFPQQSQQTPAST) the composition is skewed to polar residues. The segment at 1–29 (METRFPQQSQQTPASTNRRRPFKHEDYPC) is disordered. Residues 38–60 (LYVLIFLAIFLSKFTNQLLLSLL) traverse the membrane as a helical segment.

It belongs to the Leviviricetes lysis protein family.

Its subcellular location is the host cell inner membrane. It is found in the host cell outer membrane. Functionally, induces the formation of specific membrane adhesion sites between the inner and outer membranes, apparently leading to host cell lysis. Lysis may be performed via activation of host murein hydrolases. This Escherichia phage MS2 (Bacteriophage MS2) protein is Lysis protein.